The chain runs to 89 residues: Small ribosomal subunit protein uS14A (89 aa).

It belongs to the universal ribosomal protein uS14 family. In terms of assembly, part of the 30S ribosomal subunit. Contacts proteins S3 and S10.

Its function is as follows. Binds 16S rRNA, required for the assembly of 30S particles and may also be responsible for determining the conformation of the 16S rRNA at the A site. This Limosilactobacillus reuteri (strain DSM 20016) (Lactobacillus reuteri) protein is Small ribosomal subunit protein uS14A.